The chain runs to 667 residues: Heat shock protein DDB_G0283913 (667 aa).

The next 2 helical transmembrane spans lie at 2–22 (FVGT…KKIL) and 224–244 (MFIC…LNEL). The stretch at 18-82 (IKKILKRKKE…ELAKKLNCYI (65 aa)) forms a coiled coil. The interval 432–478 (IDDTIQDNDKSGSEVSTPTISSSSSSPLQPIIKDEKDDNIENKSDEA) is disordered. The segment covering 444–457 (SEVSTPTISSSSSS) has biased composition (low complexity). A compositionally biased stretch (basic and acidic residues) spans 463-477 (IKDEKDDNIENKSDE). A sHSP domain is found at 551-667 (MVFSSGFKPF…VITFKFEKIG (117 aa)).

Belongs to the small heat shock protein (HSP20) family.

It is found in the membrane. The protein is Heat shock protein DDB_G0283913 of Dictyostelium discoideum (Social amoeba).